The chain runs to 417 residues: Gamma-glutamyl phosphate reductase (417 aa).

This sequence belongs to the gamma-glutamyl phosphate reductase family.

The protein localises to the cytoplasm. It carries out the reaction L-glutamate 5-semialdehyde + phosphate + NADP(+) = L-glutamyl 5-phosphate + NADPH + H(+). Its pathway is amino-acid biosynthesis; L-proline biosynthesis; L-glutamate 5-semialdehyde from L-glutamate: step 2/2. Functionally, catalyzes the NADPH-dependent reduction of L-glutamate 5-phosphate into L-glutamate 5-semialdehyde and phosphate. The product spontaneously undergoes cyclization to form 1-pyrroline-5-carboxylate. In Chlorobium phaeobacteroides (strain BS1), this protein is Gamma-glutamyl phosphate reductase.